The sequence spans 483 residues: Glutamyl-tRNA(Gln) amidotransferase subunit A (483 aa).

Catalysis depends on charge relay system residues K76 and S151. Catalysis depends on S175, which acts as the Acyl-ester intermediate.

This sequence belongs to the amidase family. GatA subfamily. In terms of assembly, heterotrimer of A, B and C subunits.

It carries out the reaction L-glutamyl-tRNA(Gln) + L-glutamine + ATP + H2O = L-glutaminyl-tRNA(Gln) + L-glutamate + ADP + phosphate + H(+). Its function is as follows. Allows the formation of correctly charged Gln-tRNA(Gln) through the transamidation of misacylated Glu-tRNA(Gln) in organisms which lack glutaminyl-tRNA synthetase. The reaction takes place in the presence of glutamine and ATP through an activated gamma-phospho-Glu-tRNA(Gln). This chain is Glutamyl-tRNA(Gln) amidotransferase subunit A, found in Azotobacter vinelandii (strain DJ / ATCC BAA-1303).